Reading from the N-terminus, the 283-residue chain is Nucleotide-binding protein ABBFA_002973 (283 aa).

9-16 is an ATP binding site; that stretch reads GQSGSGKS. Residue 59–62 coordinates GTP; that stretch reads DVRS.

The protein belongs to the RapZ-like family.

In terms of biological role, displays ATPase and GTPase activities. This is Nucleotide-binding protein ABBFA_002973 from Acinetobacter baumannii (strain AB307-0294).